A 358-amino-acid chain; its full sequence is Isopentenyl-diphosphate delta-isomerase (358 aa).

12 to 13 (RK) serves as a coordination point for substrate. Residues 69 to 71 (AMT), S99, and N128 each bind FMN. Q158 is a substrate binding site. E159 is a binding site for Mg(2+). FMN contacts are provided by residues K190, T220, 267 to 269 (GIR), and 288 to 289 (AG).

It belongs to the IPP isomerase type 2 family. In terms of assembly, homooctamer. Dimer of tetramers. Requires FMN as cofactor. NADPH serves as cofactor. The cofactor is Mg(2+).

The protein resides in the cytoplasm. The enzyme catalyses isopentenyl diphosphate = dimethylallyl diphosphate. Its function is as follows. Involved in the biosynthesis of isoprenoids. Catalyzes the 1,3-allylic rearrangement of the homoallylic substrate isopentenyl (IPP) to its allylic isomer, dimethylallyl diphosphate (DMAPP). The chain is Isopentenyl-diphosphate delta-isomerase from Listeria monocytogenes serotype 4b (strain CLIP80459).